A 470-amino-acid chain; its full sequence is Alpha-1A adrenergic receptor (470 aa).

The Extracellular segment spans residues Met-1–Val-27. Residues Asn-9 and Asn-12 are each glycosylated (N-linked (GlcNAc...) asparagine). Residues Val-28–Val-51 traverse the membrane as a helical segment. The Cytoplasmic segment spans residues Val-52–Phe-64. Residues Ile-65 to Ile-88 form a helical membrane-spanning segment. At Leu-89–Cys-99 the chain is on the extracellular side. A disulfide bridge connects residues Cys-99 and Cys-176. A helical membrane pass occupies residues Asn-100–Val-122. At Asp-123–Ala-143 the chain is on the cytoplasmic side. The chain crosses the membrane as a helical span at residues Leu-144–Glu-167. The Extracellular segment spans residues Pro-168–Glu-181. The chain crosses the membrane as a helical span at residues Pro-182–Cys-205. The Cytoplasmic segment spans residues Arg-206 to Thr-271. Residues Leu-272–Ile-295 form a helical membrane-spanning segment. Residues Phe-296–Asp-303 are Extracellular-facing. The chain crosses the membrane as a helical span at residues Thr-304 to Ser-327. Residues Asn-328–Val-470 lie on the Cytoplasmic side of the membrane. Cys-343 carries S-palmitoyl cysteine lipidation. A disordered region spans residues Gly-375 to Glu-416. The span at Ser-381–Pro-392 shows a compositional bias: polar residues.

Belongs to the G-protein coupled receptor 1 family. Adrenergic receptor subfamily. ADRA1A sub-subfamily.

The protein resides in the cell membrane. This alpha-adrenergic receptor mediates its action by association with G proteins that activate a phosphatidylinositol-calcium second messenger system. This is Alpha-1A adrenergic receptor (adra1a) from Oryzias latipes (Japanese rice fish).